The chain runs to 154 residues: Myoglobin (154 aa).

The Globin domain occupies Gly2–Lys148. Ser4 is modified (phosphoserine). His65 lines the nitrite pocket. His65 is an O2 binding site. Phosphothreonine is present on Thr68. Residue His94 participates in heme b binding.

It belongs to the globin family. Monomeric.

The protein localises to the cytoplasm. The protein resides in the sarcoplasm. It carries out the reaction Fe(III)-heme b-[protein] + nitric oxide + H2O = Fe(II)-heme b-[protein] + nitrite + 2 H(+). The enzyme catalyses H2O2 + AH2 = A + 2 H2O. Monomeric heme protein which primary function is to store oxygen and facilitate its diffusion within muscle tissues. Reversibly binds oxygen through a pentacoordinated heme iron and enables its timely and efficient release as needed during periods of heightened demand. Depending on the oxidative conditions of tissues and cells, and in addition to its ability to bind oxygen, it also has a nitrite reductase activity whereby it regulates the production of bioactive nitric oxide. Under stress conditions, like hypoxia and anoxia, it also protects cells against reactive oxygen species thanks to its pseudoperoxidase activity. This Didelphis virginiana (North American opossum) protein is Myoglobin (MB).